A 628-amino-acid polypeptide reads, in one-letter code: 1-deoxy-D-xylulose-5-phosphate synthase (628 aa).

Residues His72 and 113–115 (GHS) contribute to the thiamine diphosphate site. Position 144 (Asp144) interacts with Mg(2+). Thiamine diphosphate contacts are provided by residues 145–146 (GA), Asn173, Tyr284, and Glu367. Asn173 is a Mg(2+) binding site.

Belongs to the transketolase family. DXPS subfamily. As to quaternary structure, homodimer. It depends on Mg(2+) as a cofactor. Requires thiamine diphosphate as cofactor.

It catalyses the reaction D-glyceraldehyde 3-phosphate + pyruvate + H(+) = 1-deoxy-D-xylulose 5-phosphate + CO2. Its pathway is metabolic intermediate biosynthesis; 1-deoxy-D-xylulose 5-phosphate biosynthesis; 1-deoxy-D-xylulose 5-phosphate from D-glyceraldehyde 3-phosphate and pyruvate: step 1/1. Catalyzes the acyloin condensation reaction between C atoms 2 and 3 of pyruvate and glyceraldehyde 3-phosphate to yield 1-deoxy-D-xylulose-5-phosphate (DXP). In Exiguobacterium sibiricum (strain DSM 17290 / CCUG 55495 / CIP 109462 / JCM 13490 / 255-15), this protein is 1-deoxy-D-xylulose-5-phosphate synthase.